The sequence spans 346 residues: Glucose-6-phosphatase 3 (346 aa).

Topologically, residues 1 to 24 (MESTLGAGIAMAEALQNQLPWLEN) are lumenal. A helical transmembrane segment spans residues 25 to 45 (VWLWVTFLGDPKSLFLFYFPA). Residues 46-54 (AYYASRRVG) lie on the Cytoplasmic side of the membrane. Residues 55-75 (IAVLWISLITEWLNLVFKWFL) traverse the membrane as a helical segment. Topologically, residues 76-108 (FGDRPFWWVHESGYYSQAPAQVHQFPSSCETGP) are lumenal. Arginine 79 serves as a coordination point for substrate. The chain crosses the membrane as a helical span at residues 109–129 (GSPSGHCMITGAALWPIMTAV). The Proton donor role is filled by histidine 114. Topologically, residues 130–140 (SSQMATRAHSR) are cytoplasmic. A helical membrane pass occupies residues 141–162 (WVRVIPSLAYCTFLLAVGLSRV). A substrate-binding site is contributed by arginine 161. The Lumenal segment spans residues 163–167 (FLLAH). The active-site Nucleophile is histidine 167. Residues 168–186 (FPHQVLAGLITGAVLGWLM) traverse the membrane as a helical segment. At 187–197 (TPQVPMERELS) the chain is on the cytoplasmic side. A helical membrane pass occupies residues 198–218 (FYGLTSLALLLGASLIYWTLF). Residues 219 to 254 (TLGLDLSWSINLASKWCERPEWVHLDSRPFASLSRD) lie on the Lumenal side of the membrane. A helical transmembrane segment spans residues 255 to 273 (SGAALGLGIALHSPCYAQV). Over 274-283 (RRAHLGYGQK) the chain is Cytoplasmic. The helical transmembrane segment at 284–304 (LVCLVLAMGLLGPLNWLGYPP) threads the bilayer. Residues 305–307 (QIS) are Lumenal-facing. Residues 308 to 328 (LFYIFNFLKYTLWPCLVLALV) traverse the membrane as a helical segment. Residues 329 to 346 (PWLVHMFSAQEAPPIRSS) lie on the Cytoplasmic side of the membrane.

This sequence belongs to the glucose-6-phosphatase family.

It localises to the endoplasmic reticulum membrane. The enzyme catalyses D-glucose 6-phosphate + H2O = D-glucose + phosphate. The protein operates within carbohydrate biosynthesis; gluconeogenesis. With respect to regulation, inhibited by vanadate. Functionally, hydrolyzes glucose-6-phosphate to glucose in the endoplasmic reticulum. May form with the glucose-6-phosphate transporter (SLC37A4/G6PT) a ubiquitously expressed complex responsible for glucose production through glycogenolysis and gluconeogenesis. Probably required for normal neutrophil function. The sequence is that of Glucose-6-phosphatase 3 (G6PC3) from Bos taurus (Bovine).